The sequence spans 197 residues: Peptidyl-tRNA hydrolase (197 aa).

A tRNA-binding site is contributed by tyrosine 18. Histidine 23 functions as the Proton acceptor in the catalytic mechanism. TRNA-binding residues include phenylalanine 69, asparagine 71, and asparagine 117.

The protein belongs to the PTH family. In terms of assembly, monomer.

The protein localises to the cytoplasm. It carries out the reaction an N-acyl-L-alpha-aminoacyl-tRNA + H2O = an N-acyl-L-amino acid + a tRNA + H(+). Hydrolyzes ribosome-free peptidyl-tRNAs (with 1 or more amino acids incorporated), which drop off the ribosome during protein synthesis, or as a result of ribosome stalling. Functionally, catalyzes the release of premature peptidyl moieties from peptidyl-tRNA molecules trapped in stalled 50S ribosomal subunits, and thus maintains levels of free tRNAs and 50S ribosomes. This chain is Peptidyl-tRNA hydrolase, found in Tolumonas auensis (strain DSM 9187 / NBRC 110442 / TA 4).